Consider the following 249-residue polypeptide: NADH dehydrogenase [ubiquinone] flavoprotein 2, mitochondrial (249 aa).

A mitochondrion-targeting transit peptide spans 1 to 32 (MFFSAALRARAAGLTAQWGRHVRNLHKTAMQN). N6-acetyllysine is present on K61. [2Fe-2S] cluster is bound by residues C135, C140, C176, and C180. The residue at position 193 (Y193) is a Phosphotyrosine; by SRC. The tract at residues 213 to 249 (IPKPGPRSGRFSCEPAGGLTSLTEPPKGPGFGVQAGL) is disordered.

It belongs to the complex I 24 kDa subunit family. As to quaternary structure, core subunit of respiratory chain NADH dehydrogenase (Complex I) which is composed of 45 different subunits. This is a component of the flavoprotein-sulfur (FP) fragment of the enzyme. [2Fe-2S] cluster is required as a cofactor.

The protein resides in the mitochondrion inner membrane. The enzyme catalyses a ubiquinone + NADH + 5 H(+)(in) = a ubiquinol + NAD(+) + 4 H(+)(out). Functionally, core subunit of the mitochondrial membrane respiratory chain NADH dehydrogenase (Complex I) which catalyzes electron transfer from NADH through the respiratory chain, using ubiquinone as an electron acceptor. Parts of the peripheral arm of the enzyme, where the electrons from NADH are accepted by flavin mononucleotide (FMN) and then passed along a chain of iron-sulfur clusters by electron tunnelling to the final acceptor ubiquinone. Contains one iron-sulfur cluster. The chain is NADH dehydrogenase [ubiquinone] flavoprotein 2, mitochondrial from Gorilla gorilla gorilla (Western lowland gorilla).